The following is a 297-amino-acid chain: Bifunctional protein FolD 2 (297 aa).

NADP(+)-binding positions include 172-174 (GRG), Thr-199, and Val-240.

The protein belongs to the tetrahydrofolate dehydrogenase/cyclohydrolase family. Homodimer.

The enzyme catalyses (6R)-5,10-methylene-5,6,7,8-tetrahydrofolate + NADP(+) = (6R)-5,10-methenyltetrahydrofolate + NADPH. It carries out the reaction (6R)-5,10-methenyltetrahydrofolate + H2O = (6R)-10-formyltetrahydrofolate + H(+). Its pathway is one-carbon metabolism; tetrahydrofolate interconversion. Functionally, catalyzes the oxidation of 5,10-methylenetetrahydrofolate to 5,10-methenyltetrahydrofolate and then the hydrolysis of 5,10-methenyltetrahydrofolate to 10-formyltetrahydrofolate. The polypeptide is Bifunctional protein FolD 2 (Paenarthrobacter aurescens (strain TC1)).